The chain runs to 238 residues: Thymidine kinase, cytosolic (238 aa).

Position 2 is an N-acetylserine (serine 2). Residues serine 2 and serine 13 each carry the phosphoserine modification. ATP contacts are provided by residues 26–33, 58–60, and 97–100; these read GPMFSGKS, DTR, and DEGQ. The Proton acceptor role is filled by glutamate 98. Substrate is bound at residue phenylalanine 128. Cysteine 153 and cysteine 156 together coordinate Zn(2+). Residues 172-176 and tyrosine 181 each bind substrate; that span reads VEVIG. The Zn(2+) site is built by cysteine 185 and cysteine 188. The short motif at 206-208 is the KEN box element; that stretch reads KEN. Serine 235 carries the phosphoserine modification.

Belongs to the thymidine kinase family. Homotetramer. Tetramerization from dimerization is induced by ATP and increases catalytic efficiency due to a high affinity for thymidine. Tetramerization is inhibited by phosphorylation at Ser-13. Interacts (via the KEN box) with FZR1. In terms of processing, phosphorylated on Ser-13 in mitosis. Phosphorylation of Ser-13 by CDK1 during mitosis reduces homotetramerization and catalytic efficiency when DNA replication is complete and intracellular TK1 is still present at a high level. Polyubiquitinated. Postmitosis, ubiquitination leads to proteasomal degradation. The KEN box sequence located at the C-terminal region targets for degradation by the anaphase promoting complex (APC/C) activated and rate-limited by FZR1.

The protein resides in the cytoplasm. The catalysed reaction is thymidine + ATP = dTMP + ADP + H(+). Cell-cycle-regulated enzyme of importance in nucleotide metabolism. Catalyzes the first enzymatic step in the salvage pathway converting thymidine into thymidine monophosphate. Transcriptional regulation limits expression to the S phase of the cell cycle and transient expression coincides with the oscillation in the intracellular dTTP concentration. The polypeptide is Thymidine kinase, cytosolic (TK1) (Bos taurus (Bovine)).